The chain runs to 209 residues: Uracil phosphoribosyltransferase (209 aa).

Residues Arg79, Arg104, and 131–139 contribute to the 5-phospho-alpha-D-ribose 1-diphosphate site; that span reads DPMLATGAS. Residues Ile194 and 199–201 each bind uracil; that span reads GDA. Asp200 is a 5-phospho-alpha-D-ribose 1-diphosphate binding site.

This sequence belongs to the UPRTase family. Requires Mg(2+) as cofactor.

The catalysed reaction is UMP + diphosphate = 5-phospho-alpha-D-ribose 1-diphosphate + uracil. It participates in pyrimidine metabolism; UMP biosynthesis via salvage pathway; UMP from uracil: step 1/1. Its activity is regulated as follows. Allosterically activated by GTP. Catalyzes the conversion of uracil and 5-phospho-alpha-D-ribose 1-diphosphate (PRPP) to UMP and diphosphate. This is Uracil phosphoribosyltransferase from Staphylococcus haemolyticus (strain JCSC1435).